Reading from the N-terminus, the 127-residue chain is Fluoride-specific ion channel FluC (127 aa).

4 helical membrane-spanning segments follow: residues 4-24, 35-55, 71-91, and 103-123; these read LLLAVFIGGGTGSVARWLLSM, LGTLAANLIGAFIIGMGFAWF, TGFCGGLTTFSTFSAEVVFLL, and VFVNLLGSFAMTALAFWLFSA. The Na(+) site is built by G75 and T78.

The protein belongs to the fluoride channel Fluc/FEX (TC 1.A.43) family.

It localises to the cell inner membrane. It carries out the reaction fluoride(in) = fluoride(out). Na(+) is not transported, but it plays an essential structural role and its presence is essential for fluoride channel function. Fluoride-specific ion channel. Important for reducing fluoride concentration in the cell, thus reducing its toxicity. This Shigella flexneri serotype 5b (strain 8401) protein is Fluoride-specific ion channel FluC.